Consider the following 152-residue polypeptide: Allergen Asp f 15 (152 aa).

Positions 1 to 19 (MKFTTPISLISLFVSSALA) are cleaved as a signal peptide. Intrachain disulfides connect Cys53/Cys90 and Cys93/Cys148.

It belongs to the cerato-platanin family.

It is found in the secreted. The chain is Allergen Asp f 15 from Aspergillus fumigatus (strain ATCC MYA-4609 / CBS 101355 / FGSC A1100 / Af293) (Neosartorya fumigata).